Here is a 391-residue protein sequence, read N- to C-terminus: ATP phosphoribosyltransferase regulatory subunit (391 aa).

It belongs to the class-II aminoacyl-tRNA synthetase family. HisZ subfamily. In terms of assembly, heteromultimer composed of HisG and HisZ subunits.

The protein resides in the cytoplasm. It participates in amino-acid biosynthesis; L-histidine biosynthesis; L-histidine from 5-phospho-alpha-D-ribose 1-diphosphate: step 1/9. In terms of biological role, required for the first step of histidine biosynthesis. May allow the feedback regulation of ATP phosphoribosyltransferase activity by histidine. This chain is ATP phosphoribosyltransferase regulatory subunit, found in Nitrosomonas europaea (strain ATCC 19718 / CIP 103999 / KCTC 2705 / NBRC 14298).